A 319-amino-acid polypeptide reads, in one-letter code: D-alanine--D-alanine ligase (319 aa).

Residues 120–315 enclose the ATP-grasp domain; it reads KRVLAQAGVP…YPELLRRLVE (196 aa). 147–198 is an ATP binding site; it reads DPPFFVKPANTGSSVGISRVERFQDLEAALALAFRYDEKAVVEKALSPVREL. 3 residues coordinate Mg(2+): D270, E282, and N284.

This sequence belongs to the D-alanine--D-alanine ligase family. Requires Mg(2+) as cofactor. It depends on Mn(2+) as a cofactor.

It localises to the cytoplasm. The catalysed reaction is 2 D-alanine + ATP = D-alanyl-D-alanine + ADP + phosphate + H(+). It participates in cell wall biogenesis; peptidoglycan biosynthesis. In terms of biological role, cell wall formation. This chain is D-alanine--D-alanine ligase, found in Thermus thermophilus (strain ATCC BAA-163 / DSM 7039 / HB27).